The primary structure comprises 451 residues: Trigger factor (451 aa).

Positions 165 to 250 (DDKLTIDFEG…LHQIQVREAL (86 aa)) constitute a PPIase FKBP-type domain.

Belongs to the FKBP-type PPIase family. Tig subfamily.

The protein resides in the cytoplasm. It catalyses the reaction [protein]-peptidylproline (omega=180) = [protein]-peptidylproline (omega=0). In terms of biological role, involved in protein export. Acts as a chaperone by maintaining the newly synthesized protein in an open conformation. Functions as a peptidyl-prolyl cis-trans isomerase. The protein is Trigger factor of Helicobacter pylori (strain P12).